A 214-amino-acid polypeptide reads, in one-letter code: ATP-dependent dethiobiotin synthetase BioD (214 aa).

Residue 10–15 (GIGKTY) participates in ATP binding. Thr14 serves as a coordination point for Mg(2+). Lys35 is a catalytic residue. A substrate-binding site is contributed by Thr39. ATP contacts are provided by residues Asp44, 109-112 (EGAG), and 169-170 (NC). 2 residues coordinate Mg(2+): Asp44 and Glu109.

Belongs to the dethiobiotin synthetase family. As to quaternary structure, homodimer. The cofactor is Mg(2+).

The protein localises to the cytoplasm. It carries out the reaction (7R,8S)-7,8-diammoniononanoate + CO2 + ATP = (4R,5S)-dethiobiotin + ADP + phosphate + 3 H(+). It participates in cofactor biosynthesis; biotin biosynthesis; biotin from 7,8-diaminononanoate: step 1/2. In terms of biological role, catalyzes a mechanistically unusual reaction, the ATP-dependent insertion of CO2 between the N7 and N8 nitrogen atoms of 7,8-diaminopelargonic acid (DAPA, also called 7,8-diammoniononanoate) to form a ureido ring. This Methanocaldococcus jannaschii (strain ATCC 43067 / DSM 2661 / JAL-1 / JCM 10045 / NBRC 100440) (Methanococcus jannaschii) protein is ATP-dependent dethiobiotin synthetase BioD.